A 387-amino-acid polypeptide reads, in one-letter code: Thermostable celloxylanase (387 aa).

The region spanning 41–382 (AEDIPSLAEA…KPAFWAIVDP (342 aa)) is the GH10 domain. The Proton donor role is filled by Glu-185. The active-site Nucleophile is the Glu-293.

It belongs to the glycosyl hydrolase 10 (cellulase F) family.

It carries out the reaction Endohydrolysis of (1-&gt;4)-beta-D-glucosidic linkages in cellulose, lichenin and cereal beta-D-glucans.. It catalyses the reaction Endohydrolysis of (1-&gt;4)-beta-D-xylosidic linkages in xylans.. It participates in glycan degradation; xylan degradation. In terms of biological role, active toward xylan, carboxymethylcellulose, P-nitrophenyl-beta-D-xylopyranoside and P-nitrophenyl-beta-D-cellobioside. The sequence is that of Thermostable celloxylanase (xynB) from Thermoclostridium stercorarium (Clostridium stercorarium).